A 512-amino-acid chain; its full sequence is Glucose-6-phosphate 1-dehydrogenase (512 aa).

NADP(+) is bound by residues R61, 103–104 (EF), and K171. 4 residues coordinate substrate: H201, K205, E239, and D258. The Proton acceptor role is filled by H263. Substrate is bound by residues K360 and K365. The disordered stretch occupies residues 479 to 512 (QDSSPSFPNYPAGSSGPKEADALIERDGRSWRPL). Over residues 496–512 (KEADALIERDGRSWRPL) the composition is skewed to basic and acidic residues.

It belongs to the glucose-6-phosphate dehydrogenase family.

The catalysed reaction is D-glucose 6-phosphate + NADP(+) = 6-phospho-D-glucono-1,5-lactone + NADPH + H(+). The protein operates within carbohydrate degradation; pentose phosphate pathway; D-ribulose 5-phosphate from D-glucose 6-phosphate (oxidative stage): step 1/3. Its function is as follows. Catalyzes the oxidation of glucose 6-phosphate to 6-phosphogluconolactone. This Chlamydia pneumoniae (Chlamydophila pneumoniae) protein is Glucose-6-phosphate 1-dehydrogenase.